The primary structure comprises 254 residues: Probable transcriptional regulatory protein HDEF_0869 (254 aa).

The interval 1-20 (MAGHSKWANTKHRKAAQDAK) is disordered.

Belongs to the TACO1 family.

The protein localises to the cytoplasm. The sequence is that of Probable transcriptional regulatory protein HDEF_0869 from Hamiltonella defensa subsp. Acyrthosiphon pisum (strain 5AT).